We begin with the raw amino-acid sequence, 337 residues long: RNA 3'-terminal phosphate cyclase (337 aa).

Residues Q101 and 282–285 (HMSD) each bind ATP. Residue H306 is the Tele-AMP-histidine intermediate of the active site.

This sequence belongs to the RNA 3'-terminal cyclase family. Type 1 subfamily.

It localises to the cytoplasm. The enzyme catalyses a 3'-end 3'-phospho-ribonucleotide-RNA + ATP = a 3'-end 2',3'-cyclophospho-ribonucleotide-RNA + AMP + diphosphate. In terms of biological role, catalyzes the conversion of 3'-phosphate to a 2',3'-cyclic phosphodiester at the end of RNA. The mechanism of action of the enzyme occurs in 3 steps: (A) adenylation of the enzyme by ATP; (B) transfer of adenylate to an RNA-N3'P to produce RNA-N3'PP5'A; (C) and attack of the adjacent 2'-hydroxyl on the 3'-phosphorus in the diester linkage to produce the cyclic end product. The biological role of this enzyme is unknown but it is likely to function in some aspects of cellular RNA processing. The polypeptide is RNA 3'-terminal phosphate cyclase (Saccharolobus islandicus (strain M.16.4 / Kamchatka #3) (Sulfolobus islandicus)).